We begin with the raw amino-acid sequence, 291 residues long: Nucleotide-binding protein lhv_0732 (291 aa).

13–20 contributes to the ATP binding site; sequence GMSGAGKT. 61–64 is a GTP binding site; sequence DLRV.

The protein belongs to the RapZ-like family.

Functionally, displays ATPase and GTPase activities. The polypeptide is Nucleotide-binding protein lhv_0732 (Lactobacillus helveticus (strain DPC 4571)).